The chain runs to 145 residues: Copper transporter 4 (145 aa).

Transmembrane regions (helical) follow at residues 53 to 73 and 106 to 126; these read GMYA…EWLA and YLVI…AIFG.

Belongs to the copper transporter (Ctr) (TC 1.A.56) family. SLC31A subfamily. Highly expressed in roots and at lower levels in leaves, stems and flowers.

It localises to the membrane. Functionally, involved in the transport of copper. This Arabidopsis thaliana (Mouse-ear cress) protein is Copper transporter 4 (COPT4).